The following is a 448-amino-acid chain: Protein chibby homolog 2 (448 aa).

A phosphoserine mark is found at Ser-41, Ser-86, Ser-89, Ser-97, Ser-124, Ser-144, Ser-148, and Ser-150. The stretch at 163-198 (AKEFVLQEENKSLREENKALREENRMLRKENKILQV) forms a coiled coil. Positions 206–226 (SLGREESRPPSPLPQKDSASL) are disordered. 2 positions are modified to phosphoserine: Ser-212 and Ser-225. A coiled-coil region spans residues 242–267 (KEDSTLQLLREENRALQQLLEQKQAY). A disordered region spans residues 270–321 (QTEDAAAPAEESKPAPSPHEEPCSPGLLQDQGSGLSSHFEEPRGPPAPQEDS). Over residues 279–291 (EESKPAPSPHEEP) the composition is skewed to basic and acidic residues. Residues Ser-335 and Ser-338 each carry the phosphoserine modification. A coiled-coil region spans residues 356–414 (LQLLREMRQALQALLKENRLLQEENRTLQVLRAEHRGFQEENKALWENNKLKLQQKLVI).

Belongs to the chibby family. SPERT subfamily. In terms of assembly, homodimer. Binds to NEK1.

This chain is Protein chibby homolog 2 (CBY2), found in Macaca fascicularis (Crab-eating macaque).